The primary structure comprises 387 residues: Palmitoyltransferase ZDHHC16A (387 aa).

2 helical membrane-spanning segments follow: residues 73-93 (WFGM…VFIA) and 106-126 (SPGW…MIVF). The 51-residue stretch at 150-200 (SVCKKCIIPKPARSHHCGICKTCILKMDHHCPWLNNCVGHFNHRYFFSFCL) folds into the DHHC domain. The active-site S-palmitoyl cysteine intermediate is the C180. Transmembrane regions (helical) follow at residues 198 to 218 (FCLF…HLFI), 236 to 256 (GVPV…GVAG), and 281 to 301 (VIYM…LTLW).

It belongs to the DHHC palmitoyltransferase family. Expressed in the central nervous system (CNS). Expressed in the developing forebrain, and especially in the telencephalon.

The protein resides in the endoplasmic reticulum membrane. The enzyme catalyses L-cysteinyl-[protein] + hexadecanoyl-CoA = S-hexadecanoyl-L-cysteinyl-[protein] + CoA. Its function is as follows. Palmitoyl acyltransferase that mediates palmitoylation of proteins and is required during embryonic heart development. Involved in the proliferation of neural stem cells by regulating the FGF/ERK pathway. Involved in the proliferation of neural stem cells by regulating the FGF/ERK pathway. The chain is Palmitoyltransferase ZDHHC16A from Danio rerio (Zebrafish).